The following is a 559-amino-acid chain: 2,3-bisphosphoglycerate-independent phosphoglycerate mutase (559 aa).

Residues Asp-28 and Ser-81 each contribute to the Mn(2+) site. Ser-81 (phosphoserine intermediate) is an active-site residue. Residues His-140, 170–171 (RD), Arg-206, Arg-213, 286–289 (RADR), and Lys-361 each bind substrate. Mn(2+) contacts are provided by Asp-430, His-434, Asp-471, His-472, and His-501.

This sequence belongs to the BPG-independent phosphoglycerate mutase family. In terms of assembly, monomer. Requires Mn(2+) as cofactor. The N-terminus is blocked. As to expression, found ubiquitously in germinating seed.

The protein localises to the cytoplasm. It catalyses the reaction (2R)-2-phosphoglycerate = (2R)-3-phosphoglycerate. It participates in carbohydrate degradation; glycolysis; pyruvate from D-glyceraldehyde 3-phosphate: step 3/5. In terms of biological role, catalyzes the interconversion of 2-phosphoglycerate and 3-phosphoglycerate. The polypeptide is 2,3-bisphosphoglycerate-independent phosphoglycerate mutase (Zea mays (Maize)).